Consider the following 332-residue polypeptide: Succinylglutamate desuccinylase (332 aa).

3 residues coordinate Zn(2+): histidine 59, glutamate 62, and histidine 151. Glutamate 215 is an active-site residue.

It belongs to the AspA/AstE family. Succinylglutamate desuccinylase subfamily. Zn(2+) serves as cofactor.

It carries out the reaction N-succinyl-L-glutamate + H2O = L-glutamate + succinate. It participates in amino-acid degradation; L-arginine degradation via AST pathway; L-glutamate and succinate from L-arginine: step 5/5. Transforms N(2)-succinylglutamate into succinate and glutamate. The chain is Succinylglutamate desuccinylase from Pseudomonas aeruginosa (strain LESB58).